The sequence spans 761 residues: Phosphoribosylformylglycinamidine synthase subunit PurL (761 aa).

Residue His-48 is part of the active site. Tyr-51 and Lys-90 together coordinate ATP. Mg(2+) is bound at residue Glu-92. Substrate is bound by residues 93–96 and Arg-115; that span reads SHNH. His-94 serves as the catalytic Proton acceptor. Asp-116 contributes to the Mg(2+) binding site. Gln-239 lines the substrate pocket. Asp-267 provides a ligand contact to Mg(2+). Position 311–313 (311–313) interacts with substrate; sequence ESQ. Positions 499 and 536 each coordinate ATP. Position 537 (Asn-537) interacts with Mg(2+). Ser-539 contributes to the substrate binding site.

The protein belongs to the FGAMS family. As to quaternary structure, monomer. Part of the FGAM synthase complex composed of 1 PurL, 1 PurQ and 2 PurS subunits.

Its subcellular location is the cytoplasm. The catalysed reaction is N(2)-formyl-N(1)-(5-phospho-beta-D-ribosyl)glycinamide + L-glutamine + ATP + H2O = 2-formamido-N(1)-(5-O-phospho-beta-D-ribosyl)acetamidine + L-glutamate + ADP + phosphate + H(+). It participates in purine metabolism; IMP biosynthesis via de novo pathway; 5-amino-1-(5-phospho-D-ribosyl)imidazole from N(2)-formyl-N(1)-(5-phospho-D-ribosyl)glycinamide: step 1/2. Part of the phosphoribosylformylglycinamidine synthase complex involved in the purines biosynthetic pathway. Catalyzes the ATP-dependent conversion of formylglycinamide ribonucleotide (FGAR) and glutamine to yield formylglycinamidine ribonucleotide (FGAM) and glutamate. The FGAM synthase complex is composed of three subunits. PurQ produces an ammonia molecule by converting glutamine to glutamate. PurL transfers the ammonia molecule to FGAR to form FGAM in an ATP-dependent manner. PurS interacts with PurQ and PurL and is thought to assist in the transfer of the ammonia molecule from PurQ to PurL. The protein is Phosphoribosylformylglycinamidine synthase subunit PurL of Thermosynechococcus vestitus (strain NIES-2133 / IAM M-273 / BP-1).